The chain runs to 184 residues: mRNA transport regulator MTR2 (184 aa).

A disordered region spans residues 111–135 (KMGQDATVPIQPNNTGNRNRPNDMN). The segment covering 120–129 (IQPNNTGNRN) has biased composition (polar residues). Position 125 is a phosphothreonine (Thr-125).

As to quaternary structure, interacts with MEX67.

Its subcellular location is the nucleus. Affects mRNA transport from the nucleus to the cytoplasm. This chain is mRNA transport regulator MTR2 (MTR2), found in Saccharomyces cerevisiae (strain ATCC 204508 / S288c) (Baker's yeast).